The chain runs to 306 residues: tRNA-cytidine(32) 2-sulfurtransferase (306 aa).

The PP-loop motif motif lies at 44 to 49 (SGGKDS). Positions 119, 122, and 210 each coordinate [4Fe-4S] cluster.

Belongs to the TtcA family. In terms of assembly, homodimer. It depends on Mg(2+) as a cofactor. [4Fe-4S] cluster serves as cofactor.

The protein resides in the cytoplasm. It catalyses the reaction cytidine(32) in tRNA + S-sulfanyl-L-cysteinyl-[cysteine desulfurase] + AH2 + ATP = 2-thiocytidine(32) in tRNA + L-cysteinyl-[cysteine desulfurase] + A + AMP + diphosphate + H(+). It participates in tRNA modification. Catalyzes the ATP-dependent 2-thiolation of cytidine in position 32 of tRNA, to form 2-thiocytidine (s(2)C32). The sulfur atoms are provided by the cysteine/cysteine desulfurase (IscS) system. The polypeptide is tRNA-cytidine(32) 2-sulfurtransferase (Photorhabdus laumondii subsp. laumondii (strain DSM 15139 / CIP 105565 / TT01) (Photorhabdus luminescens subsp. laumondii)).